Here is a 364-residue protein sequence, read N- to C-terminus: L-carnitine dehydrogenase (364 aa).

Gly11–Gly16 provides a ligand contact to NAD(+). The interval Lys336–Gly364 is disordered. Residues Ala348–Gly364 are compositionally biased toward basic residues.

This sequence belongs to the 3-hydroxyacyl-CoA dehydrogenase family. L-carnitine dehydrogenase subfamily. Homodimer.

The protein resides in the cytoplasm. The enzyme catalyses carnitine + NAD(+) = 3-dehydrocarnitine + NADH + H(+). It participates in amine and polyamine metabolism; carnitine metabolism. In terms of biological role, catalyzes the NAD(+)-dependent oxidation of L-carnitine to 3-dehydrocarnitine. The sequence is that of L-carnitine dehydrogenase from Mesorhizobium japonicum (strain LMG 29417 / CECT 9101 / MAFF 303099) (Mesorhizobium loti (strain MAFF 303099)).